Reading from the N-terminus, the 333-residue chain is Taste receptor type 2 member 123 (333 aa).

At 1–14 (MFSQKTNYSHLFTF) the chain is on the extracellular side. The chain crosses the membrane as a helical span at residues 15 to 37 (SIIFYVEIVTGILGNGFIALVNI). The Cytoplasmic portion of the chain corresponds to 38–57 (MDWLKRRRISTADQILTALA). A helical membrane pass occupies residues 58-77 (LTRLIYVWSVLICILLLFLC). Over 78–91 (PHLSMRPEMFTAIG) the chain is Extracellular. The helical transmembrane segment at 92–114 (VIWVVDNHFSIWLATCLGVFYFL) threads the bilayer. The Cytoplasmic portion of the chain corresponds to 115–133 (KIASFSNSLFLYLKWRVKK). The helical transmembrane segment at 134 to 156 (VVLMIILISLIFLMLNISSLGMY) threads the bilayer. The Extracellular segment spans residues 157-204 (DHFSIDVYEGNMSYNLVDSTHFPRIFLFTNSSKVFLIANSSHVFLPIN). N167, N186, and N195 each carry an N-linked (GlcNAc...) asparagine glycan. The chain crosses the membrane as a helical span at residues 205–227 (SLFMLIPFTVSLVAFFVLFLSLW). Residues 228-250 (KHHKKMQVNAKGPRDASTMAHTK) lie on the Cytoplasmic side of the membrane. A helical membrane pass occupies residues 251–273 (ALQIGFSFLLLYAIYLLFIITGI). At 274 to 282 (LNLDLMRCI) the chain is on the extracellular side. A helical transmembrane segment spans residues 283-305 (VILLFDHISGAVFSISHSFVLIL). The Cytoplasmic segment spans residues 306–333 (GNSKLRQATLSVLPCLRCRSKDMDTVVF).

This sequence belongs to the G-protein coupled receptor T2R family. Expressed in subsets of taste receptor cells of the tongue and palate epithelium and exclusively in gustducin-positive cells. Expressed in the antrum and fundus (part of the stomach), duodenum and in gastric endocrine cells.

The protein localises to the membrane. Gustducin-coupled receptor implicated in the perception of bitter compounds in the oral cavity and the gastrointestinal tract. Signals through PLCB2 and the calcium-regulated cation channel TRPM5. This chain is Taste receptor type 2 member 123 (Tas2r123), found in Rattus norvegicus (Rat).